Consider the following 283-residue polypeptide: Bifunctional protein FolD (283 aa).

NADP(+) contacts are provided by residues 165 to 167 (GAS) and serine 190.

The protein belongs to the tetrahydrofolate dehydrogenase/cyclohydrolase family. Homodimer.

It carries out the reaction (6R)-5,10-methylene-5,6,7,8-tetrahydrofolate + NADP(+) = (6R)-5,10-methenyltetrahydrofolate + NADPH. It catalyses the reaction (6R)-5,10-methenyltetrahydrofolate + H2O = (6R)-10-formyltetrahydrofolate + H(+). It participates in one-carbon metabolism; tetrahydrofolate interconversion. In terms of biological role, catalyzes the oxidation of 5,10-methylenetetrahydrofolate to 5,10-methenyltetrahydrofolate and then the hydrolysis of 5,10-methenyltetrahydrofolate to 10-formyltetrahydrofolate. This Cupriavidus pinatubonensis (strain JMP 134 / LMG 1197) (Cupriavidus necator (strain JMP 134)) protein is Bifunctional protein FolD.